The following is a 251-amino-acid chain: Triosephosphate isomerase (251 aa).

Substrate is bound at residue 9–11 (NWK). Histidine 95 functions as the Electrophile in the catalytic mechanism. Residue glutamate 167 is the Proton acceptor of the active site. Residues glycine 173, serine 213, and 234–235 (GG) contribute to the substrate site. Serine 213 is modified (phosphoserine).

The protein belongs to the triosephosphate isomerase family. In terms of assembly, homodimer.

It is found in the cytoplasm. It catalyses the reaction D-glyceraldehyde 3-phosphate = dihydroxyacetone phosphate. It functions in the pathway carbohydrate biosynthesis; gluconeogenesis. Its pathway is carbohydrate degradation; glycolysis; D-glyceraldehyde 3-phosphate from glycerone phosphate: step 1/1. Involved in the gluconeogenesis. Catalyzes stereospecifically the conversion of dihydroxyacetone phosphate (DHAP) to D-glyceraldehyde-3-phosphate (G3P). This is Triosephosphate isomerase from Bacillus cereus (strain ATCC 10987 / NRS 248).